A 324-amino-acid chain; its full sequence is Delta-aminolevulinic acid dehydratase (324 aa).

3 residues coordinate Zn(2+): cysteine 120, cysteine 122, and cysteine 130. Residue lysine 195 is the Schiff-base intermediate with substrate of the active site. The 5-aminolevulinate site is built by arginine 205 and arginine 216. Position 232 (glutamate 232) interacts with Mg(2+). Catalysis depends on lysine 247, which acts as the Schiff-base intermediate with substrate. 5-aminolevulinate is bound by residues serine 273 and tyrosine 312.

This sequence belongs to the ALAD family. Homooctamer. Zn(2+) serves as cofactor.

The catalysed reaction is 2 5-aminolevulinate = porphobilinogen + 2 H2O + H(+). The protein operates within porphyrin-containing compound metabolism; protoporphyrin-IX biosynthesis; coproporphyrinogen-III from 5-aminolevulinate: step 1/4. Its activity is regulated as follows. Allosteric enzyme. Stimulated by magnesium ions. Its function is as follows. Catalyzes an early step in the biosynthesis of tetrapyrroles. Binds two molecules of 5-aminolevulinate per subunit, each at a distinct site, and catalyzes their condensation to form porphobilinogen. This chain is Delta-aminolevulinic acid dehydratase (hemB), found in Escherichia coli (strain K12).